Here is a 1623-residue protein sequence, read N- to C-terminus: ABC transporter C family member 2 (1623 aa).

9 helical membrane passes run 37 to 57 (FVLG…IWLA), 76 to 96 (FLAL…IMGI), 109 to 129 (FEAF…VMIL), 145 to 165 (FAVI…LSVK), 172 to 192 (VLYL…LLFM), 336 to 356 (AWMG…GVLC), 440 to 460 (VASL…TVII), 527 to 547 (FILN…FTLL), and 557 to 577 (FTSL…PNII). An ABC transmembrane type-1 1 domain is found at 302–582 (FWWGGFWKIG…LPNIITQVVN (281 aa)). The region spanning 614-838 (ISIRNGYFSW…GPLFQRLMEN (225 aa)) is the ABC transporter 1 domain. 649–656 (GSTGEGKT) serves as a coordination point for ATP. The tract at residues 842–890 (VEEYSEENGEAEADQTAEQPVANGNTNGLQMDGSDDKKSKEGNKKGGKS) is disordered. Residues 845–856 (YSEENGEAEADQ) show a composition bias toward acidic residues. Positions 857-870 (TAEQPVANGNTNGL) are enriched in polar residues. Over residues 875-885 (SDDKKSKEGNK) the composition is skewed to basic and acidic residues. Helical transmembrane passes span 914-934 (ALGG…TEVF), 955-975 (GPLF…LVTL), 1032-1054 (AVFV…LIGI), 1058-1077 (LSLW…YLYY), 1143-1163 (LGIR…SFAV), and 1177-1197 (STMG…TGVL). The 285-residue stretch at 921–1205 (VMMLLLCYVL…VLRLASLAEN (285 aa)) folds into the ABC transmembrane type-1 2 domain. Residues 1236–1251 (WPSSGSIKFEDVVLRY) are interaction with calmodulin and FKP42/TWD1. Residues 1242 to 1476 (IKFEDVVLRY…EGSSFSKMVQ (235 aa)) enclose the ABC transporter 2 domain. 1276 to 1283 (GRTGAGKS) serves as a coordination point for ATP.

It belongs to the ABC transporter superfamily. ABCC family. Conjugate transporter (TC 3.A.1.208) subfamily. Interacts with FKBP42/TWD1 and probably with calmodulin (CaM). In terms of tissue distribution, ubiquitous, at low levels.

Its subcellular location is the vacuole membrane. The enzyme catalyses ATP + H2O + xenobioticSide 1 = ADP + phosphate + xenobioticSide 2.. With respect to regulation, reciprocal promotion of DNP-GS and E(2)17betaG uptake. E(2)17betaG uptake is also stimulated by GSH and S-methyl-glutathione (S-methyl-GS), and, to a lower extent, by GSSG and C3G-GS. Metolachlor-GS and decyl-GS slightly inhibit E(2)17betaG uptake. Its function is as follows. Pump for glutathione S-conjugates. Mediates the transport of S-conjugates such as GSH, S-(2,4-dinitrophenyl)-glutathione (DNP-GS), GSSG, cyanidin 3-glucoside-GS (C3G-GS) and metolachlor-GS (MOC-GS), glucuronides such as 17-beta-estradiol 17-(beta-D-glucuronide) (E(2)17betaG), and of the chlorophyll catabolite such as B.napus nonfluorescent chlorophyll catabolite (Bn-NCC-1). The chain is ABC transporter C family member 2 (ABCC2) from Arabidopsis thaliana (Mouse-ear cress).